Reading from the N-terminus, the 481-residue chain is 3-isopropylmalate dehydratase large subunit (481 aa).

Positions 357, 417, and 420 each coordinate [4Fe-4S] cluster.

Belongs to the aconitase/IPM isomerase family. LeuC type 1 subfamily. In terms of assembly, heterodimer of LeuC and LeuD. [4Fe-4S] cluster serves as cofactor.

It catalyses the reaction (2R,3S)-3-isopropylmalate = (2S)-2-isopropylmalate. Its pathway is amino-acid biosynthesis; L-leucine biosynthesis; L-leucine from 3-methyl-2-oxobutanoate: step 2/4. In terms of biological role, catalyzes the isomerization between 2-isopropylmalate and 3-isopropylmalate, via the formation of 2-isopropylmaleate. This is 3-isopropylmalate dehydratase large subunit from Maricaulis maris (strain MCS10) (Caulobacter maris).